Reading from the N-terminus, the 671-residue chain is Putative protein kinase C delta type homolog (671 aa).

The tract at residues 1 to 136 (MMFTRAQVRK…ITNRRGAIKH (136 aa)) is disordered. Low complexity predominate over residues 14-27 (SNSSSQRPRSSGGS). Residues 57–101 (ARRDQYRDRDHYGKHSFELPRQHSKEEAYHRDRESSAGGVDRGER) show a composition bias toward basic and acidic residues. Residues 102-116 (SGIGGNGGGVTGGGV) are compositionally biased toward gly residues. 2 consecutive Phorbol-ester/DAG-type zinc fingers follow at residues 144–194 (GHRF…LGKC) and 216–266 (PHRF…ANLC). Positions 343-601 (FHFLAVLGKG…AGDIADHIFF (259 aa)) constitute a Protein kinase domain. Residues 349–357 (LGKGSFGKV) and K372 each bind ATP. Catalysis depends on D467, which acts as the Proton acceptor. An AGC-kinase C-terminal domain is found at 602 to 671 (RPIDWGLLEK…TYTNPHITLD (70 aa)).

Belongs to the protein kinase superfamily. AGC Ser/Thr protein kinase family. PKC subfamily.

It catalyses the reaction L-seryl-[protein] + ATP = O-phospho-L-seryl-[protein] + ADP + H(+). The catalysed reaction is L-threonyl-[protein] + ATP = O-phospho-L-threonyl-[protein] + ADP + H(+). This is Putative protein kinase C delta type homolog from Drosophila melanogaster (Fruit fly).